A 129-amino-acid polypeptide reads, in one-letter code: Small ribosomal subunit protein uS11 (129 aa).

It belongs to the universal ribosomal protein uS11 family. Part of the 30S ribosomal subunit. Interacts with proteins S7 and S18. Binds to IF-3.

In terms of biological role, located on the platform of the 30S subunit, it bridges several disparate RNA helices of the 16S rRNA. Forms part of the Shine-Dalgarno cleft in the 70S ribosome. This chain is Small ribosomal subunit protein uS11, found in Bradyrhizobium diazoefficiens (strain JCM 10833 / BCRC 13528 / IAM 13628 / NBRC 14792 / USDA 110).